Consider the following 93-residue polypeptide: Large ribosomal subunit protein bL31B (93 aa).

It belongs to the bacterial ribosomal protein bL31 family. Type B subfamily. In terms of assembly, part of the 50S ribosomal subunit.

This Pseudomonas syringae pv. syringae (strain B728a) protein is Large ribosomal subunit protein bL31B.